The sequence spans 243 residues: Nuclear protein UL4 homolog (243 aa).

The disordered stretch occupies residues 193 to 226 (RPDDQTTPTPTPHQYTSQRRQPETNCPSPQPAFF). Residues 205–219 (HQYTSQRRQPETNCP) are compositionally biased toward polar residues.

This sequence belongs to the alphaherpesvirinae HHV-1 UL4 family.

It is found in the host nucleus. This chain is Nuclear protein UL4 homolog, found in Varicella-zoster virus (strain Oka vaccine) (HHV-3).